The primary structure comprises 371 residues: Phospholipid-transporting ATPase accessory subunit ivn1 (371 aa).

The Cytoplasmic portion of the chain corresponds to 1-39; the sequence is MSQTEIVKKPKHKRFKRPDKSRFVQQTLPAWQFIFTPWT. A helical transmembrane segment spans residues 40-60; the sequence is VLPLLFLLGIVFAPLGAGMFV. Residues 61–325 lie on the Extracellular side of the membrane; that stretch reads ASRRVKELRI…STTSVIGGKN (265 aa). Cystine bridges form between C75-C111 and C166-C181. N99 carries N-linked (GlcNAc...) asparagine glycosylation. N-linked (GlcNAc...) asparagine glycosylation is found at N190, N212, N216, N233, N284, and N297. A helical membrane pass occupies residues 326–346; the sequence is YFLGILYFVIGGLCAASGVIL. The Cytoplasmic portion of the chain corresponds to 347-371; it reads SIACLIKPRRVGDPRYLSWNRGKSS.

It belongs to the CDC50/LEM3 family.

The protein localises to the endoplasmic reticulum membrane. Accessory component of a P4-ATPase flippase complex which catalyzes the hydrolysis of ATP coupled to the transport of aminophospholipids from the lumenal to the cytosolic leaflet of membranes and ensures the maintenance of asymmetric distribution of phospholipids. This is Phospholipid-transporting ATPase accessory subunit ivn1 (ivn1) from Schizosaccharomyces pombe (strain 972 / ATCC 24843) (Fission yeast).